The chain runs to 599 residues: Elongation factor 4 (599 aa).

Residues 2-185 (KYIRNFSIIA…RIIIDIPVPQ (184 aa)) enclose the tr-type G domain. GTP contacts are provided by residues 14-19 (NHGKST) and 132-135 (NKID).

It belongs to the TRAFAC class translation factor GTPase superfamily. Classic translation factor GTPase family. LepA subfamily.

It is found in the cell inner membrane. The enzyme catalyses GTP + H2O = GDP + phosphate + H(+). Required for accurate and efficient protein synthesis under certain stress conditions. May act as a fidelity factor of the translation reaction, by catalyzing a one-codon backward translocation of tRNAs on improperly translocated ribosomes. Back-translocation proceeds from a post-translocation (POST) complex to a pre-translocation (PRE) complex, thus giving elongation factor G a second chance to translocate the tRNAs correctly. Binds to ribosomes in a GTP-dependent manner. The chain is Elongation factor 4 from Blochmanniella floridana.